We begin with the raw amino-acid sequence, 177 residues long: NAD(P)H-quinone oxidoreductase subunit 6, chloroplastic (177 aa).

5 consecutive transmembrane segments (helical) span residues 10–30, 33–53, 61–81, 92–112, and 152–172; these read ILVV…VLFT, IYSA…YILL, AQLL…VMFM, LWTV…FLLI, and FFLP…GAIS.

Belongs to the complex I subunit 6 family. In terms of assembly, NDH is composed of at least 16 different subunits, 5 of which are encoded in the nucleus.

Its subcellular location is the plastid. The protein localises to the chloroplast thylakoid membrane. It carries out the reaction a plastoquinone + NADH + (n+1) H(+)(in) = a plastoquinol + NAD(+) + n H(+)(out). The catalysed reaction is a plastoquinone + NADPH + (n+1) H(+)(in) = a plastoquinol + NADP(+) + n H(+)(out). Its function is as follows. NDH shuttles electrons from NAD(P)H:plastoquinone, via FMN and iron-sulfur (Fe-S) centers, to quinones in the photosynthetic chain and possibly in a chloroplast respiratory chain. The immediate electron acceptor for the enzyme in this species is believed to be plastoquinone. Couples the redox reaction to proton translocation, and thus conserves the redox energy in a proton gradient. The chain is NAD(P)H-quinone oxidoreductase subunit 6, chloroplastic (ndhG) from Lemna minor (Common duckweed).